Consider the following 314-residue polypeptide: Probable dimethyladenosine transferase (314 aa).

Residues histidine 36, leucine 38, glycine 63, glutamate 84, aspartate 112, and asparagine 127 each coordinate S-adenosyl-L-methionine.

Belongs to the class I-like SAM-binding methyltransferase superfamily. rRNA adenine N(6)-methyltransferase family. As to quaternary structure, part of the small subunit (SSU) processome, composed of more than 70 proteins and the RNA chaperone small nucleolar RNA (snoRNA) U3.

It is found in the nucleus. It localises to the nucleoplasm. The protein localises to the nucleolus. It carries out the reaction adenosine(1779)/adenosine(1780) in 18S rRNA + 4 S-adenosyl-L-methionine = N(6)-dimethyladenosine(1779)/N(6)-dimethyladenosine(1780) in 18S rRNA + 4 S-adenosyl-L-homocysteine + 4 H(+). In terms of biological role, specifically dimethylates two adjacent adenosines in the loop of a conserved hairpin near the 3'-end of 18S rRNA in the 40S particle. Involved in the pre-rRNA processing steps leading to small-subunit rRNA production independently of its RNA-modifying catalytic activity. Part of the small subunit (SSU) processome, first precursor of the small eukaryotic ribosomal subunit. During the assembly of the SSU processome in the nucleolus, many ribosome biogenesis factors, an RNA chaperone and ribosomal proteins associate with the nascent pre-rRNA and work in concert to generate RNA folding, modifications, rearrangements and cleavage as well as targeted degradation of pre-ribosomal RNA by the RNA exosome. This is Probable dimethyladenosine transferase (dimt1) from Dictyostelium discoideum (Social amoeba).